Reading from the N-terminus, the 210-residue chain is Vacuolar protein sorting-associated protein 28 homolog (210 aa).

Positions 1-106 (MSSQNANLMR…REGRPITVKD (106 aa)) constitute a VPS28 N-terminal domain. Positions 110–206 (NVLKHIASIV…AYQAFNKALN (97 aa)) constitute a VPS28 C-terminal domain.

It belongs to the VPS28 family. As to quaternary structure, component of the ESCRT-I complex (endosomal sorting complex required for transport I). In terms of tissue distribution, expressed in embryos.

Its subcellular location is the endosome. In terms of biological role, component of the ESCRT-I complex, a regulator of vesicular trafficking process. The sequence is that of Vacuolar protein sorting-associated protein 28 homolog (vps-28) from Caenorhabditis elegans.